The primary structure comprises 374 residues: Eukaryotic translation initiation factor 3 subunit M (374 aa).

Residues 180–339 (EAAKVMVELL…KKVVVSHSTH (160 aa)) enclose the PCI domain.

This sequence belongs to the eIF-3 subunit M family. In terms of assembly, component of the eukaryotic translation initiation factor 3 (eIF-3) complex, which is composed of 13 subunits: eif3a, eif3b, eif3c, eif3d, eif3e, eif3f, eif3g, eif3h, eif3i, eif3j, eif3k, eif3l and eif3m.

Its subcellular location is the cytoplasm. Its function is as follows. Component of the eukaryotic translation initiation factor 3 (eIF-3) complex, which is involved in protein synthesis of a specialized repertoire of mRNAs and, together with other initiation factors, stimulates binding of mRNA and methionyl-tRNAi to the 40S ribosome. The eIF-3 complex specifically targets and initiates translation of a subset of mRNAs involved in cell proliferation. This Xenopus laevis (African clawed frog) protein is Eukaryotic translation initiation factor 3 subunit M (eif3m).